The sequence spans 87 residues: UPF0250 protein CKO_02527 (87 aa).

Belongs to the UPF0250 family.

In Citrobacter koseri (strain ATCC BAA-895 / CDC 4225-83 / SGSC4696), this protein is UPF0250 protein CKO_02527.